Consider the following 625-residue polypeptide: Chromatin structure-remodeling complex subunit RSC4 (625 aa).

The segment at 1–35 (MVVKKRKLATEAGGSDERPKYLPGKHPKNQEKTPH) is disordered. 2 Bromo domains span residues 53–158 (WHIP…VLKA) and 181–292 (KLVD…IQKE). Phosphoserine occurs at positions 199 and 545. The segment covering 536 to 552 (RTSNVNSNLSQPQQQEN) has biased composition (polar residues). The disordered stretch occupies residues 536–555 (RTSNVNSNLSQPQQQENDVI).

Component of the two forms of the RSC complex composed of at least either RSC1 or RSC2, and ARP7, ARP9, LDB7, NPL6, RSC3, RSC30, RSC4, RSC58, RSC6, RSC8, RSC9, SFH1, STH1, HTL1 and probably RTT102. The complexes interact with histone and histone variant components of centromeric chromatin.

It is found in the nucleus. In terms of biological role, component of the chromatin structure remodeling complex (RSC), which is involved in transcription regulation and nucleosome positioning. RSC is responsible for the transfer of a histone octamer from a nucleosome core particle to naked DNA. The reaction requires ATP and involves an activated RSC-nucleosome intermediate. Remodeling reaction also involves DNA translocation, DNA twist and conformational change. As a reconfigurer of centromeric and flanking nucleosomes, RSC complex is required both for proper kinetochore function in chromosome segregation and, via a PKC1-dependent signaling pathway, for organization of the cellular cytoskeleton. This chain is Chromatin structure-remodeling complex subunit RSC4 (RSC4), found in Saccharomyces cerevisiae (strain ATCC 204508 / S288c) (Baker's yeast).